The sequence spans 117 residues: Large ribosomal subunit protein bL20 (117 aa).

The protein belongs to the bacterial ribosomal protein bL20 family.

Its function is as follows. Binds directly to 23S ribosomal RNA and is necessary for the in vitro assembly process of the 50S ribosomal subunit. It is not involved in the protein synthesizing functions of that subunit. This Vibrio campbellii (strain ATCC BAA-1116) protein is Large ribosomal subunit protein bL20.